The sequence spans 206 residues: Thymidylate kinase (206 aa).

ATP is bound at residue 10 to 17 (GIDGAGKS).

The protein belongs to the thymidylate kinase family.

The enzyme catalyses dTMP + ATP = dTDP + ADP. Functionally, phosphorylation of dTMP to form dTDP in both de novo and salvage pathways of dTTP synthesis. The sequence is that of Thymidylate kinase (tmk) from Neisseria meningitidis serogroup A / serotype 4A (strain DSM 15465 / Z2491).